An 862-amino-acid chain; its full sequence is Probable glutaminase ARB_05535/05536 (862 aa).

An N-terminal signal peptide occupies residues 1–19; sequence MLSWVLLAWAVACSALAGA. N-linked (GlcNAc...) asparagine glycosylation is found at Asn-106, Asn-273, Asn-436, Asn-448, Asn-486, Asn-610, and Asn-744. Positions 798–862 are disordered; that stretch reads FLDDKDNNSP…SQMTIVNEND (65 aa). The segment covering 853 to 862 has biased composition (polar residues); the sequence is SQMTIVNEND.

Belongs to the fungal glutaminase gtaA family.

The protein localises to the secreted. The enzyme catalyses L-glutamine + H2O = L-glutamate + NH4(+). Its function is as follows. Glutaminase catalyzes the hydrolysis of glutamine to glutamic acid and plays a key role in nitrogen metabolism. This is Probable glutaminase ARB_05535/05536 from Arthroderma benhamiae (strain ATCC MYA-4681 / CBS 112371) (Trichophyton mentagrophytes).